Reading from the N-terminus, the 104-residue chain is Replication restart protein PriB (104 aa).

The SSB domain maps to 1–101; sequence MTNRLVLSGT…LHAEQIELID (101 aa).

The protein belongs to the PriB family. In terms of assembly, homodimer. Interacts with PriA and DnaT. Component of the replication restart primosome. Primosome assembly occurs via a 'hand-off' mechanism. PriA binds to replication forks, subsequently PriB then DnaT bind; DnaT then displaces ssDNA to generate the helicase loading substrate.

In terms of biological role, involved in the restart of stalled replication forks, which reloads the replicative helicase on sites other than the origin of replication; the PriA-PriB pathway is the major replication restart pathway. During primosome assembly it facilitates complex formation between PriA and DnaT on DNA; stabilizes PriA on DNA. Stimulates the DNA unwinding activity of PriA helicase. This Shigella dysenteriae serotype 1 (strain Sd197) protein is Replication restart protein PriB.